The primary structure comprises 534 residues: Calmodulin calcium-dependent NAD kinase (534 aa).

Positions 167–196 (QKVPKLKDFVMAATRKQRFERVTKDLKVKR) are calmodulin-binding. Position 238–245 (238–245 (GGMGAGKS)) interacts with ATP.

Interacts with calmodulin (CaM) in a calcium Ca(2+)-dependent manner in vitro. It depends on Ca(2+) as a cofactor.

The protein resides in the mitochondrion outer membrane. It carries out the reaction NAD(+) + ATP = ADP + NADP(+) + H(+). Phosphorylates NAD(+) to produce NADP(+) in a calmodulin calcium-dependent manner. Does not possess activity toward NADH. Has broad specificity for the phosphoryl donor, as ATP, CTP, GTP and UTP can be used interchangeably and produce similar efficiencies. May play a role in producing NADP(H) needed to regulate the elicitor-induced reactive oxygen species (ROS) burst by sustaining the activity of NADPH oxidases. Does not seem to play a role in photosynthesis-driven growth. In Arabidopsis thaliana (Mouse-ear cress), this protein is Calmodulin calcium-dependent NAD kinase.